We begin with the raw amino-acid sequence, 873 residues long: Alanine--tRNA ligase (873 aa).

4 residues coordinate Zn(2+): histidine 562, histidine 566, cysteine 664, and histidine 668.

It belongs to the class-II aminoacyl-tRNA synthetase family. The cofactor is Zn(2+).

The protein resides in the cytoplasm. The catalysed reaction is tRNA(Ala) + L-alanine + ATP = L-alanyl-tRNA(Ala) + AMP + diphosphate. Its function is as follows. Catalyzes the attachment of alanine to tRNA(Ala) in a two-step reaction: alanine is first activated by ATP to form Ala-AMP and then transferred to the acceptor end of tRNA(Ala). Also edits incorrectly charged Ser-tRNA(Ala) and Gly-tRNA(Ala) via its editing domain. This chain is Alanine--tRNA ligase, found in Photobacterium profundum (strain SS9).